The primary structure comprises 606 residues: Protein spire homolog 2 (606 aa).

The KIND domain occupies 21–219 (LSLEEVLKSY…RALFLETLEL (199 aa)). The segment at 147-181 (KHCGSNAAKDEGYSGQDEEEEEEEEEEEEGAGRGI) is disordered. The span at 162–175 (QDEEEEEEEEEEEE) shows a compositional bias: acidic residues. 2 WH2 domains span residues 263–277 (QLMK…LKKV) and 357–374 (LHDR…LRPV). Disordered regions lie at residues 438 to 464 (DEDS…RSFS) and 517 to 537 (CRSL…ASHG). Over residues 445 to 464 (VDMRRVESSPTPLKRDRSFS) the composition is skewed to basic and acidic residues. A spir-box region spans residues 554-574 (LALTVDGVINVRRILVKAEME).

It belongs to the spire family.

The protein resides in the cytoplasm. It is found in the cytoskeleton. It localises to the cytosol. Its subcellular location is the cell membrane. The protein localises to the cytoplasmic vesicle membrane. Functionally, acts as an actin nucleation factor, remains associated with the slow-growing pointed end of the new filament. Involved in intracellular vesicle transport along actin fibers, providing a novel link between actin cytoskeleton dynamics and intracellular transport. Required for asymmetric spindle positioning and asymmetric cell division during oocyte meiosis. Required for normal formation of the cleavage furrow and for polar body extrusion during female germ cell meiosis. Also acts in the nucleus: together with SPIRE1 and SPIRE2, promotes assembly of nuclear actin filaments in response to DNA damage in order to facilitate movement of chromatin and repair factors after DNA damage. In Danio rerio (Zebrafish), this protein is Protein spire homolog 2 (spire2).